We begin with the raw amino-acid sequence, 273 residues long: Large ribosomal subunit protein uL2cz/uL2cy (273 aa).

Disordered stretches follow at residues 1 to 24 (MAIH…QAKS) and 224 to 254 (NPVD…PALG).

It belongs to the universal ribosomal protein uL2 family. As to quaternary structure, part of the 50S ribosomal subunit.

The protein resides in the plastid. It is found in the chloroplast. In Nymphaea alba (White water-lily), this protein is Large ribosomal subunit protein uL2cz/uL2cy (rpl2-A).